Reading from the N-terminus, the 235-residue chain is 2,3,4,5-tetrahydropyridine-2,6-dicarboxylate N-acetyltransferase (235 aa).

The protein belongs to the transferase hexapeptide repeat family. DapH subfamily.

It carries out the reaction (S)-2,3,4,5-tetrahydrodipicolinate + acetyl-CoA + H2O = L-2-acetamido-6-oxoheptanedioate + CoA. Its pathway is amino-acid biosynthesis; L-lysine biosynthesis via DAP pathway; LL-2,6-diaminopimelate from (S)-tetrahydrodipicolinate (acetylase route): step 1/3. In terms of biological role, catalyzes the transfer of an acetyl group from acetyl-CoA to tetrahydrodipicolinate. This Exiguobacterium sibiricum (strain DSM 17290 / CCUG 55495 / CIP 109462 / JCM 13490 / 255-15) protein is 2,3,4,5-tetrahydropyridine-2,6-dicarboxylate N-acetyltransferase.